We begin with the raw amino-acid sequence, 137 residues long: Large ribosomal subunit protein uL16 (137 aa).

This sequence belongs to the universal ribosomal protein uL16 family. As to quaternary structure, part of the 50S ribosomal subunit.

Functionally, binds 23S rRNA and is also seen to make contacts with the A and possibly P site tRNAs. This Ruegeria pomeroyi (strain ATCC 700808 / DSM 15171 / DSS-3) (Silicibacter pomeroyi) protein is Large ribosomal subunit protein uL16.